The sequence spans 361 residues: Chorismate synthase (361 aa).

Arginine 48 is an NADP(+) binding site. FMN contacts are provided by residues 125 to 127, 238 to 239, glycine 278, 293 to 297, and arginine 319; these read RSS, NA, and KPTSS.

This sequence belongs to the chorismate synthase family. As to quaternary structure, homotetramer. It depends on FMNH2 as a cofactor.

The enzyme catalyses 5-O-(1-carboxyvinyl)-3-phosphoshikimate = chorismate + phosphate. It participates in metabolic intermediate biosynthesis; chorismate biosynthesis; chorismate from D-erythrose 4-phosphate and phosphoenolpyruvate: step 7/7. In terms of biological role, catalyzes the anti-1,4-elimination of the C-3 phosphate and the C-6 proR hydrogen from 5-enolpyruvylshikimate-3-phosphate (EPSP) to yield chorismate, which is the branch point compound that serves as the starting substrate for the three terminal pathways of aromatic amino acid biosynthesis. This reaction introduces a second double bond into the aromatic ring system. The protein is Chorismate synthase of Vibrio anguillarum (strain ATCC 68554 / 775) (Listonella anguillarum).